A 314-amino-acid chain; its full sequence is 3'-5' exoribonuclease YhaM (314 aa).

Residues 163 to 279 form the HD domain; sequence HVVSMLDLAK…LHYIDNLDAK (117 aa).

Belongs to the YhaM family.

Shows a 3'-5' exoribonuclease activity. The chain is 3'-5' exoribonuclease YhaM from Bacillus cereus (strain 03BB102).